Reading from the N-terminus, the 517-residue chain is Membrane-bound lytic murein transglycosylase F (517 aa).

The signal sequence occupies residues 1–32; that stretch reads MKKFKINYLLIGIVTLLLAAALWPSIPWFGKA. A non-LT domain region spans residues 33-269; it reads ENRIAAIQSR…RLEEKYLGHG (237 aa). Residues 270 to 517 form an LT domain region; the sequence is GDFDYVDTRS…PNTLVQAPRR (248 aa). E314 is a catalytic residue.

It in the N-terminal section; belongs to the bacterial solute-binding protein 3 family. In the C-terminal section; belongs to the transglycosylase Slt family.

The protein localises to the cell outer membrane. The enzyme catalyses Exolytic cleavage of the (1-&gt;4)-beta-glycosidic linkage between N-acetylmuramic acid (MurNAc) and N-acetylglucosamine (GlcNAc) residues in peptidoglycan, from either the reducing or the non-reducing ends of the peptidoglycan chains, with concomitant formation of a 1,6-anhydrobond in the MurNAc residue.. Functionally, murein-degrading enzyme that degrades murein glycan strands and insoluble, high-molecular weight murein sacculi, with the concomitant formation of a 1,6-anhydromuramoyl product. Lytic transglycosylases (LTs) play an integral role in the metabolism of the peptidoglycan (PG) sacculus. Their lytic action creates space within the PG sacculus to allow for its expansion as well as for the insertion of various structures such as secretion systems and flagella. The polypeptide is Membrane-bound lytic murein transglycosylase F (Enterobacter sp. (strain 638)).